The sequence spans 212 residues: Redox-sensing transcriptional repressor Rex (212 aa).

Residues 17–56 (LYARSLRYLLEEGVHSVSSQELGERINVTAAQIRKDLSYF) constitute a DNA-binding region (H-T-H motif). Residue 91–96 (GIGLLG) coordinates NAD(+).

The protein belongs to the transcriptional regulatory Rex family. As to quaternary structure, homodimer.

The protein resides in the cytoplasm. Modulates transcription in response to changes in cellular NADH/NAD(+) redox state. This is Redox-sensing transcriptional repressor Rex from Chloroflexus aurantiacus (strain ATCC 29366 / DSM 635 / J-10-fl).